The sequence spans 312 residues: Malate dehydrogenase (312 aa).

Residues 7–13 and Asp-34 contribute to the NAD(+) site; that span reads GAAGGIG. Positions 81 and 87 each coordinate substrate. NAD(+)-binding positions include Asn-94 and 117–119; that span reads ITN. Residues Asn-119 and Arg-153 each coordinate substrate. The active-site Proton acceptor is His-177. NAD(+) is bound at residue Met-227.

It belongs to the LDH/MDH superfamily. MDH type 1 family. In terms of assembly, homodimer.

The catalysed reaction is (S)-malate + NAD(+) = oxaloacetate + NADH + H(+). Catalyzes the reversible oxidation of malate to oxaloacetate. This Escherichia fergusonii (strain ATCC 35469 / DSM 13698 / CCUG 18766 / IAM 14443 / JCM 21226 / LMG 7866 / NBRC 102419 / NCTC 12128 / CDC 0568-73) protein is Malate dehydrogenase.